We begin with the raw amino-acid sequence, 391 residues long: Protein CapJ (391 aa).

Its pathway is capsule biogenesis; capsule polysaccharide biosynthesis. Required for the biosynthesis of type 1 capsular polysaccharide. The protein is Protein CapJ (capJ) of Staphylococcus aureus.